The chain runs to 310 residues: Keratin, type II cytoskeletal 8 (310 aa).

Residues 1–38 form a disordered region; that stretch reads QRTLKVSSSGPRSFSSRSFSSGPSSRISSSSYSRVGSN. Lys-5 is covalently cross-linked (Glycyl lysine isopeptide (Lys-Gly) (interchain with G-Cter in SUMO2)). Phosphoserine is present on residues Ser-7, Ser-9, Ser-15, and Ser-16. A compositionally biased stretch (low complexity) spans 7 to 38; the sequence is SSSGPRSFSSRSFSSGPSSRISSSSYSRVGSN. Omega-N-methylarginine is present on Arg-17. Phosphoserine occurs at positions 18, 21, and 25. Position 26 is an omega-N-methylarginine (Arg-26). Ser-28, Ser-31, and Ser-33 each carry phosphoserine. Arg-34 is subject to Omega-N-methylarginine. Phosphoserine is present on Ser-37. Arg-42 bears the Asymmetric dimethylarginine; alternate mark. Arg-42 is subject to Omega-N-methylarginine; alternate. The interval 92-127 is coil 1A; sequence EKEQIKTLNNKFASFIDKVRFLEQQNKILETKWSFL. The IF rod domain occupies 92 to 310; the sequence is EKEQIKTLNN…LRHTKTEISE (219 aa). Lys-102 bears the N6-malonyllysine mark. Glycyl lysine isopeptide (Lys-Gly) (interchain with G-Cter in SUMO2) cross-links involve residues Lys-123 and Lys-131. The interval 128–144 is linker 1; sequence QQQKTSQSNLDGLFEKY. Residues 145–236 form a coil 1B region; that stretch reads ITNLRRQLDS…HLYEEEIKEM (92 aa). Residue Lys-198 forms a Glycyl lysine isopeptide (Lys-Gly) (interchain with G-Cter in SUMO1); alternate linkage. Residue Lys-198 forms a Glycyl lysine isopeptide (Lys-Gly) (interchain with G-Cter in SUMO2); alternate linkage. Lys-208 is modified (N6-acetyllysine). Residue Tyr-229 is modified to Phosphotyrosine. The linker 12 stretch occupies residues 237–260; that stretch reads QSQISDTSVVVSMDNSRSLDLDGI. 2 positions are modified to phosphoserine: Ser-254 and Ser-275. The tract at residues 261-310 is coil 2; the sequence is IADVRAQYEEIANRSRAEAETMYQIKYEELQLLAGKHGDDLRHTKTEISE. A Glycyl lysine isopeptide (Lys-Gly) (interchain with G-Cter in SUMO2) cross-link involves residue Lys-286. A Glycyl lysine isopeptide (Lys-Gly) (interchain with G-Cter in SUMO2); alternate cross-link involves residue Lys-296. N6-acetyllysine; alternate is present on Lys-296. Lys-305 is covalently cross-linked (Glycyl lysine isopeptide (Lys-Gly) (interchain with G-Cter in SUMO2)).

This sequence belongs to the intermediate filament family. As to quaternary structure, heterotetramer of two type I and two type II keratins. Forms a heterodimer with KRT18. Associates with KRT20. Interacts with PNN. When associated with KRT19, interacts with DMD. Interacts with APEX1. Interacts with GPER1. Interacts with EPPK1. Interacts with PKP1 and PKP2. In terms of processing, O-glycosylated. O-GlcNAcylation at multiple sites increases solubility, and decreases stability by inducing proteasomal degradation. Post-translationally, O-glycosylated (O-GlcNAcylated), in a cell cycle-dependent manner.

Its subcellular location is the cytoplasm. The protein localises to the nucleus. It is found in the nucleoplasm. The protein resides in the nucleus matrix. In terms of biological role, together with KRT19, helps to link the contractile apparatus to dystrophin at the costameres of striated muscle. The chain is Keratin, type II cytoskeletal 8 from Potorous tridactylus (Potoroo).